The sequence spans 126 residues: Large ribosomal subunit protein bL12 (126 aa).

Belongs to the bacterial ribosomal protein bL12 family. Homodimer. Part of the ribosomal stalk of the 50S ribosomal subunit. Forms a multimeric L10(L12)X complex, where L10 forms an elongated spine to which 2 to 4 L12 dimers bind in a sequential fashion. Binds GTP-bound translation factors.

Its function is as follows. Forms part of the ribosomal stalk which helps the ribosome interact with GTP-bound translation factors. Is thus essential for accurate translation. In Corynebacterium diphtheriae (strain ATCC 700971 / NCTC 13129 / Biotype gravis), this protein is Large ribosomal subunit protein bL12.